The primary structure comprises 194 residues: Peptidyl-tRNA hydrolase (194 aa).

A tRNA-binding site is contributed by tyrosine 17. The active-site Proton acceptor is histidine 22. Tyrosine 68, asparagine 70, and asparagine 116 together coordinate tRNA.

The protein belongs to the PTH family. In terms of assembly, monomer.

It localises to the cytoplasm. The enzyme catalyses an N-acyl-L-alpha-aminoacyl-tRNA + H2O = an N-acyl-L-amino acid + a tRNA + H(+). Functionally, hydrolyzes ribosome-free peptidyl-tRNAs (with 1 or more amino acids incorporated), which drop off the ribosome during protein synthesis, or as a result of ribosome stalling. Catalyzes the release of premature peptidyl moieties from peptidyl-tRNA molecules trapped in stalled 50S ribosomal subunits, and thus maintains levels of free tRNAs and 50S ribosomes. The sequence is that of Peptidyl-tRNA hydrolase from Pseudomonas paraeruginosa (strain DSM 24068 / PA7) (Pseudomonas aeruginosa (strain PA7)).